We begin with the raw amino-acid sequence, 584 residues long: AAA ATPase forming ring-shaped complexes (584 aa).

Residues Ala10–His96 are a coiled coil. Positions His40–Ala66 are disordered. Gly292–Met297 contributes to the ATP binding site.

Belongs to the AAA ATPase family. As to quaternary structure, homohexamer. Assembles into a hexameric ring structure.

The sequence is that of AAA ATPase forming ring-shaped complexes from Micrococcus luteus (strain ATCC 4698 / DSM 20030 / JCM 1464 / CCM 169 / CCUG 5858 / IAM 1056 / NBRC 3333 / NCIMB 9278 / NCTC 2665 / VKM Ac-2230) (Micrococcus lysodeikticus).